Here is a 292-residue protein sequence, read N- to C-terminus: 33 kDa chaperonin (292 aa).

2 disulfide bridges follow: C238-C240 and C271-C274.

This sequence belongs to the HSP33 family. In terms of processing, under oxidizing conditions two disulfide bonds are formed involving the reactive cysteines. Under reducing conditions zinc is bound to the reactive cysteines and the protein is inactive.

The protein resides in the cytoplasm. Functionally, redox regulated molecular chaperone. Protects both thermally unfolding and oxidatively damaged proteins from irreversible aggregation. Plays an important role in the bacterial defense system toward oxidative stress. This is 33 kDa chaperonin from Alkaliphilus metalliredigens (strain QYMF).